A 156-amino-acid polypeptide reads, in one-letter code: uncharacterized protein (156 aa).

The N-acetyltransferase domain maps to 1–145 (MIIRKFSSKD…DAILMIKKKP (145 aa)).

Belongs to the acetyltransferase family.

Its subcellular location is the cytoplasm. This is an uncharacterized protein from Methanocaldococcus jannaschii (strain ATCC 43067 / DSM 2661 / JAL-1 / JCM 10045 / NBRC 100440) (Methanococcus jannaschii).